The following is a 920-amino-acid chain: METSSSGITNGRTRVFHPVAKDVNILFDELEAVNSPCKDDDSLLHPGNLTSTSDDASRLEAGGETVPEKNKLNGLYFRDGKCRIDYILVYRKSNPQMEKREVFERNIRAEGLQMEKESSLINSDIIFVKLHAPWEVLGRYAEQMNVRMPFRRKIYYLPRRYKFMSRIDKQISRFRRWLPKKPMRLDKETLPDLEENDCYTAPFSQQRIHHFIIHNKDTFFNNATRSRIVHHILQRIKYEEGKNKIGLNRLLTNGSYEAAFPLHEGSYRSKNSIRTHGAVNHRHLLYECWASWGVWYKYQPLDLVRRYFGEKIGLYFAWLGWYTGMLFPAAFIGLFVFLYGVITLDHCQVSKEVCQATDIIMCPVCDKYCPFMRLSDSCVYAKVTHLFDNGATVFFAVFMAVWATVFLEFWKRRRAVIAYDWDLIDWEEEEEEIRPQFEAKYSKKERMNPISGKPEPYQAFADKCSRLIVSASGIFFMICVVIAAVFGIVIYRVVTVSTFAAFKWALIRNNSQVATTGTAVCINFCIIMLLNVLYEKVALLLTNLEQPRTESEWENSFTLKMFLFQFVNLNSSTFYIAFFLGRFTGHPGAYLRLINRWRLEECHPSGCLIDLCMQMGIIMVLKQTWNNFMELGYPLIQNWWTRRKVRQEHGPERKISFPQWEKDYNLQPMNAYGLFDEYLEMILQFGFTTIFVAAFPLAPLLALLNNIIEIRLDAYKFVTQWRRPLASRAKDIGIWYGILEGIGILSVITNAFVIAITSDFIPRLVYAYKYGPCAGQGEAGQKCMVGYVNASLSVFRISDFENRSEPESDGSEFSGTPLKYCRYRDYRDPPHSLVPYGYTLQFWHVLAARLAFIIVFEHLVFCIKHLISYLIPDLPKDLRDRMRREKYLIQEMMYEAELERLQKERKERKKNGKAHHNEWP.

Residues 1 to 323 (METSSSGITN…LYFAWLGWYT (323 aa)) are Cytoplasmic-facing. Residues 38 to 64 (KDDDSLLHPGNLTSTSDDASRLEAGGE) are disordered. Residues 324–344 (GMLFPAAFIGLFVFLYGVITL) form a helical membrane-spanning segment. Residues 345 to 389 (DHCQVSKEVCQATDIIMCPVCDKYCPFMRLSDSCVYAKVTHLFDN) lie on the Extracellular side of the membrane. A helical transmembrane segment spans residues 390–410 (GATVFFAVFMAVWATVFLEFW). At 411–470 (KRRRAVIAYDWDLIDWEEEEEEIRPQFEAKYSKKERMNPISGKPEPYQAFADKCSRLIVS) the chain is on the cytoplasmic side. Residues 471 to 491 (ASGIFFMICVVIAAVFGIVIY) traverse the membrane as a helical segment. Topologically, residues 492-512 (RVVTVSTFAAFKWALIRNNSQ) are extracellular. Asn-509 is a glycosylation site (N-linked (GlcNAc...) asparagine). The chain crosses the membrane as a helical span at residues 513–533 (VATTGTAVCINFCIIMLLNVL). The Cytoplasmic segment spans residues 534–560 (YEKVALLLTNLEQPRTESEWENSFTLK). Residues 561-581 (MFLFQFVNLNSSTFYIAFFLG) traverse the membrane as a helical segment. The Extracellular portion of the chain corresponds to 582–680 (RFTGHPGAYL…AYGLFDEYLE (99 aa)). Residues 681 to 701 (MILQFGFTTIFVAAFPLAPLL) traverse the membrane as a helical segment. Topologically, residues 702–733 (ALLNNIIEIRLDAYKFVTQWRRPLASRAKDIG) are cytoplasmic. Residues 734 to 754 (IWYGILEGIGILSVITNAFVI) form a helical membrane-spanning segment. The Extracellular portion of the chain corresponds to 755–850 (AITSDFIPRL…QFWHVLAARL (96 aa)). N-linked (GlcNAc...) asparagine glycosylation is found at Asn-789 and Asn-802. Residues 851 to 871 (AFIIVFEHLVFCIKHLISYLI) form a helical membrane-spanning segment. The Cytoplasmic segment spans residues 872 to 920 (PDLPKDLRDRMRREKYLIQEMMYEAELERLQKERKERKKNGKAHHNEWP).

It belongs to the anoctamin family.

The protein resides in the cell membrane. It carries out the reaction a 1,2-diacyl-sn-glycero-3-phospho-L-serine(in) = a 1,2-diacyl-sn-glycero-3-phospho-L-serine(out). The catalysed reaction is a beta-D-galactosyl-(1&lt;-&gt;1')-N-acylsphing-4-enine(out) = a beta-D-galactosyl-(1&lt;-&gt;1')-N-acylsphing-4-enine(in). The enzyme catalyses a 1,2-diacyl-sn-glycero-3-phosphocholine(in) = a 1,2-diacyl-sn-glycero-3-phosphocholine(out). Its function is as follows. Has calcium-dependent phospholipid scramblase activity; scrambles phosphatidylserine, phosphatidylcholine and galactosylceramide. Does not exhibit calcium-activated chloride channel (CaCC) activity. This is Anoctamin-4 from Bos taurus (Bovine).